A 185-amino-acid chain; its full sequence is Peptide deformylase (185 aa).

The Fe cation site is built by Cys-94 and His-136. The active site involves Glu-137. His-140 is a Fe cation binding site.

Belongs to the polypeptide deformylase family. Fe(2+) serves as cofactor.

The catalysed reaction is N-terminal N-formyl-L-methionyl-[peptide] + H2O = N-terminal L-methionyl-[peptide] + formate. Its function is as follows. Removes the formyl group from the N-terminal Met of newly synthesized proteins. Requires at least a dipeptide for an efficient rate of reaction. N-terminal L-methionine is a prerequisite for activity but the enzyme has broad specificity at other positions. This Chlorobium limicola (strain DSM 245 / NBRC 103803 / 6330) protein is Peptide deformylase.